A 491-amino-acid chain; its full sequence is Ribonuclease G (491 aa).

Residues 40–129 enclose the S1 motif domain; it reads GNIYKGRVTR…LTTDITLPSR (90 aa). Mg(2+)-binding residues include aspartate 305 and aspartate 348.

This sequence belongs to the RNase E/G family. RNase G subfamily. As to quaternary structure, homodimer, in equilibrium with possible higher multimers. The cofactor is Mg(2+).

Its subcellular location is the cytoplasm. Functionally, an endonuclease that acts in the processing of the 5'-end of 16S rRNA and 23S rRNA. It prefers 5'-monophosphorylated substrates and cleaves single-stranded sites rich in A and U residues; contributes to tRNA processing and mRNA turnover. This is Ribonuclease G (rng) from Haemophilus influenzae (strain ATCC 51907 / DSM 11121 / KW20 / Rd).